Consider the following 740-residue polypeptide: Homeobox protein 4 (740 aa).

The segment covering 1–13 has biased composition (polar residues); sequence MNTVEENNTKITD. Disordered stretches follow at residues 1-41 and 179-491; these read MNTV…ENLS and NNNN…NNEI. 4 stretches are compositionally biased toward low complexity: residues 14-34, 179-241, 251-288, and 303-316; these read NNNN…NNKN, NNNN…PQQN, NNNN…NNNN, and STTD…SVPS. Residues 254–287 are a coiled coil; sequence NINNNNINKNNNNYNNNNNNKNNNNNNNNNNNNN. Basic residues predominate over residues 317 to 328; the sequence is NKKKSSKTKQKS. The span at 339 to 363 shows a compositional bias: polar residues; that stretch reads HKSNYHQQPNQNSQHLQSKPNSPIL. 2 stretches are compositionally biased toward low complexity: residues 365–390 and 397–491; these read SSPL…SPPQ and NNNF…NNEI. The stretch at 472 to 500 forms a coiled coil; it reads NTNTNNNNNKNNNNNNNNEIENNNNEELI. A DNA-binding region (homeobox) is located at residues 605-667; that stretch reads RPKKGAKLSK…NTRRRKVPTL (63 aa). A compositionally biased stretch (low complexity) spans 686–722; the sequence is NNNNNNGGNSNFKNNNNNTITTTSTSNNNNNNNNNNH. Residues 686-740 are disordered; it reads NNNNNNGGNSNFKNNNNNTITTTSTSNNNNNNNNNNHNEMECDDGENEESSEYDD. Residues 726-740 are compositionally biased toward acidic residues; the sequence is ECDDGENEESSEYDD.

It is found in the nucleus. In terms of biological role, putative transcription factor. This chain is Homeobox protein 4 (hbx4), found in Dictyostelium discoideum (Social amoeba).